A 487-amino-acid polypeptide reads, in one-letter code: Lysophospholipid acyltransferase 5 (487 aa).

An N-acetylalanine modification is found at alanine 2. Helical transmembrane passes span 44–64 (LIIS…YLFY), 84–104 (FNFG…FLIL), 111–131 (ITAV…GYYY), 180–200 (GVPS…FLVG), 227–247 (IIPA…YTLL), and 285–305 (VTCW…FNGF). Catalysis depends on residues asparagine 338 and histidine 374. The next 3 helical transmembrane spans lie at 364 to 384 (GLSL…LVCF), 422 to 442 (LVQQ…FCLF), and 453 to 473 (SIYF…PYIH). The Di-lysine motif signature appears at 484–487 (KKME).

Belongs to the membrane-bound acyltransferase family. In terms of tissue distribution, highly expressed in liver, pancreas and adipose tissue. Very low expression in skeletal muscle and heart. Detected in neutrophils.

The protein resides in the endoplasmic reticulum membrane. The catalysed reaction is a 1-acyl-sn-glycero-3-phosphocholine + an acyl-CoA = a 1,2-diacyl-sn-glycero-3-phosphocholine + CoA. It catalyses the reaction a 1-acyl-sn-glycero-3-phosphoethanolamine + an acyl-CoA = a 1,2-diacyl-sn-glycero-3-phosphoethanolamine + CoA. It carries out the reaction a 1-acyl-sn-glycero-3-phospho-L-serine + an acyl-CoA = a 1,2-diacyl-sn-glycero-3-phospho-L-serine + CoA. The enzyme catalyses (9Z,12Z)-octadecadienoyl-CoA + a 1-acyl-sn-glycero-3-phosphocholine = 1-acyl-2-(9Z,12Z)-octadecadienoyl-sn-glycero-3-phosphocholine + CoA. The catalysed reaction is (5Z,8Z,11Z,14Z)-eicosatetraenoyl-CoA + a 1-acyl-sn-glycero-3-phosphocholine = 1-acyl-2-(5Z,8Z,11Z,14Z-eicosatetraenoyl)-sn-glycero-3-phosphocholine + CoA. It catalyses the reaction dodecanoyl-CoA + 1-hexadecanoyl-sn-glycero-3-phosphocholine = 1-hexadecanoyl-2-dodecanoyl-sn-glycero-3-phosphocholine + CoA. It carries out the reaction octadecanoyl-CoA + 1-hexadecanoyl-sn-glycero-3-phosphocholine = 1-hexadecanoyl-2-octadecanoyl-sn-glycero-3-phosphocholine + CoA. The enzyme catalyses 1-dodecanoyl-sn-glycero-3-phosphocholine + hexadecanoyl-CoA = 1-dodecanoyl-2-hexadecanoyl-sn-glycero-3-phosphocholine + CoA. The catalysed reaction is 1-tetradecanoyl-sn-glycero-3-phosphocholine + hexadecanoyl-CoA = 1-tetradecanoyl-2-hexadecanoyl-sn-glycero-3-phosphocholine + CoA. It catalyses the reaction 1-hexadecanoyl-sn-glycero-3-phosphocholine + hexadecanoyl-CoA = 1,2-dihexadecanoyl-sn-glycero-3-phosphocholine + CoA. It carries out the reaction 1-octadecanoyl-sn-glycero-3-phosphocholine + hexadecanoyl-CoA = 1-octadecanoyl-2-hexadecanoyl-sn-glycero-3-phosphocholine + CoA. The enzyme catalyses 1-(9Z-octadecenoyl)-sn-glycero-3-phosphocholine + hexadecanoyl-CoA = 1-(9Z-octadecenoyl)-2-hexadecanoyl-sn-glycero-3-phosphocholine + CoA. The catalysed reaction is (9Z)-hexadecenoyl-CoA + 1-hexadecanoyl-sn-glycero-3-phosphocholine = 1-hexadecanoyl-2-(9Z-hexadecenoyl)-sn-glycero-3-phosphocholine + CoA. It catalyses the reaction 1-hexadecanoyl-sn-glycero-3-phosphocholine + (9Z)-octadecenoyl-CoA = 1-hexadecanoyl-2-(9Z-octadecenoyl)-sn-glycero-3-phosphocholine + CoA. It carries out the reaction (9Z,12Z)-octadecadienoyl-CoA + 1-hexadecanoyl-sn-glycero-3-phosphocholine = 1-hexadecanoyl-2-(9Z,12Z-octadecadienoyl)-sn-glycero-3-phosphocholine + CoA. The enzyme catalyses 1-dodecanoyl-sn-glycero-3-phosphocholine + (5Z,8Z,11Z,14Z)-eicosatetraenoyl-CoA = 1-dodecanoyl-2-(5Z,8Z,11Z,14Z)-eicosatetraenoyl-sn-glycero-3-phosphocholine + CoA. The catalysed reaction is (5Z,8Z,11Z,14Z)-eicosatetraenoyl-CoA + 1-hexadecanoyl-sn-glycero-3-phosphocholine = 1-hexadecanoyl-2-(5Z,8Z,11Z,14Z-eicosatetraenoyl)-sn-glycero-3-phosphocholine + CoA. It catalyses the reaction 1-octadecanoyl-sn-glycero-3-phosphocholine + (5Z,8Z,11Z,14Z)-eicosatetraenoyl-CoA = 1-octadecanoyl-2-(5Z,8Z,11Z,14Z-eicosatetraenoyl)-sn-glycero-3-phosphocholine + CoA. It carries out the reaction 1-eicosanoyl-sn-glycero-3-phosphocholine + (5Z,8Z,11Z,14Z)-eicosatetraenoyl-CoA = 1-eicosanoyl-2-(5Z,8Z,11Z,14Z)-eicosatetraenoyl-sn-glycero-3-phosphocholine + CoA. The enzyme catalyses 1-(9Z-octadecenoyl)-sn-glycero-3-phosphocholine + (9Z)-octadecenoyl-CoA = 1,2-di-(9Z-octadecenoyl)-sn-glycero-3-phosphocholine + CoA. The catalysed reaction is 1-(9Z-octadecenoyl)-sn-glycero-3-phosphocholine + (9Z,12Z)-octadecadienoyl-CoA = 1-(9Z)-octadecenoyl-2-(9Z,12Z)-octadecadienoyl-sn-glycero-3-phosphocholine + CoA. It catalyses the reaction 1-(9Z-octadecenoyl)-sn-glycero-3-phosphocholine + (5Z,8Z,11Z,14Z)-eicosatetraenoyl-CoA = 1-(9Z)-octadecenoyl-2-(5Z,8Z,11Z,14Z)-icosatetraenoyl-sn-glycero-3-phosphocholine + CoA. It carries out the reaction a 1-acyl-sn-glycero-3-phosphoethanolamine + (9Z,12Z)-octadecadienoyl-CoA = 1-acyl-2-(9Z,12Z)-octadecadienoyl-sn-glycero-3-phosphoethanolamine + CoA. The enzyme catalyses 1-(9Z-octadecenoyl)-sn-glycero-3-phosphoethanolamine + (9Z,12Z)-octadecadienoyl-CoA = 1-(9Z)-octadecenoyl-2-(9Z,12Z)-octadecadienoyl-sn-glycero-3-phosphoethanolamine + CoA. The catalysed reaction is 1-(10Z-heptadecenoyl)-sn-glycero-3-phosphoethanolamine + (9Z,12Z)-octadecadienoyl-CoA = 1-(10Z-heptadecenoyl)-2-(9Z,12Z-octadecadienoyl)-sn-glycero-3-phosphoethanolamine + CoA. It catalyses the reaction a 1-acyl-sn-glycero-3-phosphoethanolamine + (5Z,8Z,11Z,14Z)-eicosatetraenoyl-CoA = 1-acyl-2-(5Z,8Z,11Z,14Z)-eicosatetraenoyl-sn-glycero-3-phosphoethanolamine + CoA. It carries out the reaction 1-hexadecanoyl-sn-glycero-3-phosphoethanolamine + (5Z,8Z,11Z,14Z)-eicosatetraenoyl-CoA = 1-hexadecanoyl-2-(5Z,8Z,11Z,14Z-eicosatetraenoyl)-sn-glycero-3-phosphoethanolamine + CoA. The enzyme catalyses 1-(9Z-octadecenoyl)-sn-glycero-3-phosphoethanolamine + (5Z,8Z,11Z,14Z)-eicosatetraenoyl-CoA = 1-(9Z)-octadecenoyl-2-(5Z,8Z,11Z,14Z)-eicosatetraenoyl-sn-glycero-3-phosphoethanolamine + CoA. The catalysed reaction is 1-(10Z-heptadecenoyl)-sn-glycero-3-phosphoethanolamine + (5Z,8Z,11Z,14Z)-eicosatetraenoyl-CoA = 1-(10Z-heptadecenoyl)-2-(5Z,8Z,11Z,14Z-eicosatetraenoyl)-sn-glycero-3-phosphoethanolamine + CoA. It catalyses the reaction a 1-O-(1Z-alkenyl)-sn-glycero-3-phosphoethanolamine + (5Z,8Z,11Z,14Z)-eicosatetraenoyl-CoA = 1-O-(1Z)-alkenyl-2-(5Z,8Z,11Z,14Z)-eicosatetraenoyl-sn-glycero-3-phosphoethanolamine + CoA. It carries out the reaction a 1-acyl-sn-glycero-3-phospho-L-serine + (9Z,12Z)-octadecadienoyl-CoA = 1-acyl-2-(9Z,12Z-octadecadienoyl)-sn-glycero-3-phospho-L-serine + CoA. The enzyme catalyses a 1-acyl-sn-glycero-3-phospho-L-serine + (5Z,8Z,11Z,14Z)-eicosatetraenoyl-CoA = 1-acyl-2-(5Z,8Z,11Z,14Z-eicosatetraenoyl)-sn-glycero-3-phospho-L-serine + CoA. The catalysed reaction is 1-hexadecanoyl-sn-glycero-3-phospho-L-serine + (9Z)-octadecenoyl-CoA = 1-hexadecanoyl-2-(9Z-octadecenoyl)-sn-glycero-3-phospho-L-serine + CoA. It catalyses the reaction 1-(9Z-octadecenoyl)-sn-glycero-3-phospho-L-serine + (9Z)-octadecenoyl-CoA = 1,2-di-(9Z)-octadecenoyl-sn-glycero-3-phospho-L-serine + CoA. It carries out the reaction 1-hexadecanoyl-sn-glycero-3-phospho-L-serine + (9Z,12Z)-octadecadienoyl-CoA = 1-hexadecanoyl-2-(9Z,12Z-octadecadienoyl)-sn-glycero-3-phospho-L-serine + CoA. The enzyme catalyses 1-(9Z-octadecenoyl)-sn-glycero-3-phospho-L-serine + (9Z,12Z)-octadecadienoyl-CoA = 1-(9Z-octadecenoyl)-2-(9Z,12Z-octadienoyl)-sn-glycero-3-phospho-L-serine + CoA. The catalysed reaction is 1-hexadecanoyl-sn-glycero-3-phospho-L-serine + (5Z,8Z,11Z,14Z)-eicosatetraenoyl-CoA = 1-hexadecanoyl-2-(5Z,8Z,11Z,14Z-eicosatetraenoyl)-sn-glycero-3-phospho-L-serine + CoA. It catalyses the reaction 1-(9Z-octadecenoyl)-sn-glycero-3-phospho-L-serine + (5Z,8Z,11Z,14Z)-eicosatetraenoyl-CoA = 1-(9Z-octadecenoyl)-2-(5Z,8Z,11Z,14Z-eicosatetraenoyl)-sn-glycero-3-phospho-L-serine + CoA. The protein operates within lipid metabolism; phospholipid metabolism. Activity is inhibited by thimerosal. Its function is as follows. Lysophospholipid O-acyltransferase (LPLAT) that catalyzes the reacylation step of the phospholipid remodeling process also known as the Lands cycle. Catalyzes transfer of the fatty acyl chain from fatty acyl-CoA to 1-acyl lysophospholipid to form various classes of phospholipids. Converts 1-acyl lysophosphatidylcholine (LPC) into phosphatidylcholine (PC) (LPCAT activity), 1-acyl lysophosphatidylserine (LPS) into phosphatidylserine (PS) (LPSAT activity) and 1-acyl lysophosphatidylethanolamine (LPE) into phosphatidylethanolamine (PE) (LPEAT activity). Favors polyunsaturated fatty acyl-CoAs as acyl donors compared to saturated fatty acyl-CoAs. Has higher activity for LPC acyl acceptors compared to LPEs and LPSs. Can also transfer the fatty acyl chain from fatty acyl-CoA to 1-O-alkyl lysophospholipid or 1-O-alkenyl lysophospholipid with lower efficiency. Acts as a major LPC O-acyltransferase in liver and intestine. As a component of the liver X receptor/NR1H3 or NR1H2 signaling pathway, mainly catalyzes the incorporation of arachidonate into PCs of endoplasmic reticulum (ER) membranes, increasing membrane dynamics and enabling triacylglycerols transfer to nascent very low-density lipoprotein (VLDL) particles. Promotes processing of sterol regulatory protein SREBF1 in hepatocytes, likely by facilitating the translocation of SREBF1-SCAP complex from ER to the Golgi apparatus. Participates in mechanisms by which the liver X receptor/NR1H3 or NR1H2 signaling pathway counteracts lipid-induced ER stress response and inflammation. Down-regulates hepatic inflammation by limiting arachidonic acid availability for synthesis of inflammatory eicosanoids, such as prostaglandins. In enterocytes, acts as a component of a gut-brain feedback loop that coordinates dietary lipid absorption and food intake. Regulates the abundance of PCs containing linoleate and arachidonate in enterocyte membranes, enabling passive diffusion of fatty acids and cholesterol across the membrane for efficient chylomicron assembly. In the intestinal crypt, acts as a component of dietary-responsive phospholipid-cholesterol axis, regulating the biosynthesis of cholesterol and its mitogenic effects on intestinal stem cells. The polypeptide is Lysophospholipid acyltransferase 5 (LPCAT3) (Homo sapiens (Human)).